A 427-amino-acid polypeptide reads, in one-letter code: UPF0761 membrane protein Plut_1323 (427 aa).

6 helical membrane-spanning segments follow: residues 51-71 (LLSI…FAVF), 105-125 (TFTM…VLIS), 147-167 (FTLY…SLAA), 188-208 (LLSL…YLLV), 221-241 (GALV…FYVA), and 251-271 (GALS…VVVL).

Belongs to the UPF0761 family.

The protein localises to the cell inner membrane. The polypeptide is UPF0761 membrane protein Plut_1323 (Chlorobium luteolum (strain DSM 273 / BCRC 81028 / 2530) (Pelodictyon luteolum)).